The sequence spans 526 residues: Neutrophil cytosol factor 2 (526 aa).

TPR repeat units lie at residues 37-70 (SRIC…DKHL), 71-104 (AVAY…LRGN), and 121-154 (CEVL…KSEP). The residue at position 233 (threonine 233) is a Phosphothreonine. In terms of domain architecture, SH3 1 spans 240 to 299 (LEGEAHRVLFGFVPETKEELQVMPGNIVFVLKKGNDNWATVMFNGQKGLVPCNYLEPVEL). The segment covering 303 to 315 (PQQQPQEESSPQS) has biased composition (low complexity). The segment at 303-346 (PQQQPQEESSPQSDIPAPPSSKAPGRPQLSPGQKQKEEPKEVKL) is disordered. Residues 336–345 (KQKEEPKEVK) show a composition bias toward basic and acidic residues. Residues 351–429 (PYTLKVHYKY…YCLTLWCENT (79 aa)) enclose the PB1 domain. Residue serine 399 is modified to Phosphoserine. The interval 433 to 458 (QGFPDEPKESEKADANNQTTEPQLKK) is disordered. Over residues 437–446 (DEPKESEKAD) the composition is skewed to basic and acidic residues. The SH3 2 domain occupies 457-516 (KKGSQVEALFSYEATQPEDLEFQEGDIILVLSKVNEEWLEGECKGKVGIFPKVFVEDCAT).

Belongs to the NCF2/NOXA1 family. In terms of assembly, component of the phagocyte NADPH oxidase complex composed of an obligatory core heterodimer formed by the membrane proteins CYBA and CYBB and the cytosolic regulatory subunits NCF1/p47-phox, NCF2/p67-phox, NCF4/p40-phox and the small GTPase RAC1 or RAC2. Part of a cytosolic complex composed at least by NCF1, NCF2 and NCF4. Interacts with NCF4. Interacts (via the C-terminal SH3 domain) with NCF1 (via C-terminus). Interacts with SYTL1 and RAC1. May interact with NOXO1. Interacts with S100A8 and calprotectin (S100A8/9). Interacts with GBP7 (via GB1/RHD3-type G domain). Interacts with CYBB; the interaction is enhanced in the presence of GBP7.

The protein localises to the cytoplasm. Functionally, subunit of the phagocyte NADPH oxidase complex that mediates the transfer of electrons from cytosolic NADPH to O2 to produce the superoxide anion (O2(-)). In the activated complex, electrons are first transferred from NADPH to flavin adenine dinucleotide (FAD) and subsequently transferred via two heme molecules to molecular oxygen, producing superoxide through an outer-sphere reaction. Activation of the NADPH oxidase complex is initiated by the assembly of cytosolic subunits of the NADPH oxidase complex with the core NADPH oxidase complex to form a complex at the plasma membrane or phagosomal membrane. This activation process is initiated by phosphorylation dependent binding of the cytosolic NCF1/p47-phox subunit to the C-terminus of CYBA/p22-phox. The protein is Neutrophil cytosol factor 2 of Homo sapiens (Human).